The chain runs to 555 residues: MKSEDVKLGIERAPHRSLLRALGLNTESFQKPFIGIVNSFTEVVPGHIHLRRISEAVKEGINAAGGVGFEFNTIAVCDGIAMNHAGMKYSLPSREIIANTVEIMAMAHAFDGLVFIPNCDKVVPGMLMAACRLNIPSIFVSGGPMLAGRLRKNDQVSCVDLNSVFEAVGQVAKGQMTEEELLELEKVACPGCGSCAGMFTANTMNCLTEALGMALPGNGTIPAVDSRRTQLAKDTGRQILKLIKDNTCPKDIITPDAIYNAFSLDVALGGSTNSVLHVMAVAHEAGADFSLEEINRVSDTTPNLCKLRPSGPYHIENLDQAGGIGSVLKELKPWLKNDARTVSGKTIGQMADAAPKADNKVIRFASNPYSPKGGLAILFGNLAPSGSVVKRSAVAPEMMVHRGPARIFDSEELATKAIMGGKIIPGDVLVIRYEGPKGGPGMREMLTPTSLLAGMGLDKEVALITDGRFSGATRGAAMGHVSPEAAARGPIAALQDGDMINIDIHNYKLSVELSDEEIQKRLANVPAFKPKITSGYLKYYTENVTSASTGAVFKD.

Position 78 (Asp78) interacts with Mg(2+). Cys119 is a binding site for [2Fe-2S] cluster. The Mg(2+) site is built by Asp120 and Lys121. Lys121 bears the N6-carboxylysine mark. Residue Cys195 coordinates [2Fe-2S] cluster. Glu444 is a binding site for Mg(2+). Ser470 acts as the Proton acceptor in catalysis.

Belongs to the IlvD/Edd family. As to quaternary structure, homodimer. [2Fe-2S] cluster serves as cofactor. Mg(2+) is required as a cofactor.

The catalysed reaction is (2R)-2,3-dihydroxy-3-methylbutanoate = 3-methyl-2-oxobutanoate + H2O. It carries out the reaction (2R,3R)-2,3-dihydroxy-3-methylpentanoate = (S)-3-methyl-2-oxopentanoate + H2O. It participates in amino-acid biosynthesis; L-isoleucine biosynthesis; L-isoleucine from 2-oxobutanoate: step 3/4. It functions in the pathway amino-acid biosynthesis; L-valine biosynthesis; L-valine from pyruvate: step 3/4. In terms of biological role, functions in the biosynthesis of branched-chain amino acids. Catalyzes the dehydration of (2R,3R)-2,3-dihydroxy-3-methylpentanoate (2,3-dihydroxy-3-methylvalerate) into 2-oxo-3-methylpentanoate (2-oxo-3-methylvalerate) and of (2R)-2,3-dihydroxy-3-methylbutanoate (2,3-dihydroxyisovalerate) into 2-oxo-3-methylbutanoate (2-oxoisovalerate), the penultimate precursor to L-isoleucine and L-valine, respectively. This Dehalococcoides mccartyi (strain ATCC BAA-2266 / KCTC 15142 / 195) (Dehalococcoides ethenogenes (strain 195)) protein is Dihydroxy-acid dehydratase.